Here is a 193-residue protein sequence, read N- to C-terminus: ATP-dependent Clp protease proteolytic subunit 2 (193 aa).

S98 (nucleophile) is an active-site residue. H123 is a catalytic residue.

It belongs to the peptidase S14 family. As to quaternary structure, fourteen ClpP subunits assemble into 2 heptameric rings which stack back to back to give a disk-like structure with a central cavity, resembling the structure of eukaryotic proteasomes.

Its subcellular location is the cytoplasm. The catalysed reaction is Hydrolysis of proteins to small peptides in the presence of ATP and magnesium. alpha-casein is the usual test substrate. In the absence of ATP, only oligopeptides shorter than five residues are hydrolyzed (such as succinyl-Leu-Tyr-|-NHMec, and Leu-Tyr-Leu-|-Tyr-Trp, in which cleavage of the -Tyr-|-Leu- and -Tyr-|-Trp bonds also occurs).. In terms of biological role, cleaves peptides in various proteins in a process that requires ATP hydrolysis. Has a chymotrypsin-like activity. Plays a major role in the degradation of misfolded proteins. The protein is ATP-dependent Clp protease proteolytic subunit 2 of Bacillus cereus (strain ATCC 10987 / NRS 248).